Consider the following 596-residue polypeptide: A-type ATP synthase subunit A (596 aa).

241–248 (GPFGSGKT) is an ATP binding site.

It belongs to the ATPase alpha/beta chains family. Has multiple subunits with at least A(3), B(3), C, D, E, F, H, I and proteolipid K(x).

It is found in the cell membrane. The catalysed reaction is ATP + H2O + 4 H(+)(in) = ADP + phosphate + 5 H(+)(out). In terms of biological role, component of the A-type ATP synthase that produces ATP from ADP in the presence of a proton gradient across the membrane. The A chain is the catalytic subunit. The sequence is that of A-type ATP synthase subunit A from Ignicoccus hospitalis (strain KIN4/I / DSM 18386 / JCM 14125).